The primary structure comprises 299 residues: Troponin T, cardiac muscle (299 aa).

A compositionally biased stretch (acidic residues) spans 1-71 (MSDAEEEVVE…EARDAEDGPV (71 aa)). 2 disordered regions span residues 1 to 97 (MSDA…GERV) and 137 to 220 (DRIE…EKKK). Serine 2 is modified (N-acetylserine). Serine 2 is modified (phosphoserine). Composition is skewed to basic and acidic residues over residues 137–185 (DRIE…DEAR) and 204–220 (QTERKSGKRQTEREKKK). Phosphothreonine; by PKC/PRKCA is present on threonine 205. Serine 209 is modified (phosphoserine; by PKC/PRKCA). Position 214 is a phosphothreonine; by PKC/PRKCA and RAF1 (threonine 214). A Phosphothreonine; by PKC/PRKCA modification is found at threonine 295.

Belongs to the troponin T family. Phosphorylation at Thr-214 by PRKCA induces significant reduction in myofilament calcium sensitivity and actomyosin ATPase activity.

In terms of biological role, troponin T is the tropomyosin-binding subunit of troponin, the thin filament regulatory complex which confers calcium-sensitivity to striated muscle actomyosin ATPase activity. This is Troponin T, cardiac muscle (Tnnt2) from Rattus norvegicus (Rat).